A 487-amino-acid chain; its full sequence is Aspartyl/glutamyl-tRNA(Asn/Gln) amidotransferase subunit B (487 aa).

The protein belongs to the GatB/GatE family. GatB subfamily. In terms of assembly, heterotrimer of A, B and C subunits.

It carries out the reaction L-glutamyl-tRNA(Gln) + L-glutamine + ATP + H2O = L-glutaminyl-tRNA(Gln) + L-glutamate + ADP + phosphate + H(+). The enzyme catalyses L-aspartyl-tRNA(Asn) + L-glutamine + ATP + H2O = L-asparaginyl-tRNA(Asn) + L-glutamate + ADP + phosphate + 2 H(+). Allows the formation of correctly charged Asn-tRNA(Asn) or Gln-tRNA(Gln) through the transamidation of misacylated Asp-tRNA(Asn) or Glu-tRNA(Gln) in organisms which lack either or both of asparaginyl-tRNA or glutaminyl-tRNA synthetases. The reaction takes place in the presence of glutamine and ATP through an activated phospho-Asp-tRNA(Asn) or phospho-Glu-tRNA(Gln). The chain is Aspartyl/glutamyl-tRNA(Asn/Gln) amidotransferase subunit B from Acidiphilium cryptum (strain JF-5).